The primary structure comprises 389 residues: Chalcone synthase 1 (389 aa).

Cys164 is a catalytic residue.

The protein belongs to the thiolase-like superfamily. Chalcone/stilbene synthases family.

The catalysed reaction is (E)-4-coumaroyl-CoA + 3 malonyl-CoA + 3 H(+) = 2',4,4',6'-tetrahydroxychalcone + 3 CO2 + 4 CoA. It functions in the pathway secondary metabolite biosynthesis; flavonoid biosynthesis. Functionally, the primary product of this enzyme is 4,2',4',6'-tetrahydroxychalcone (also termed naringenin-chalcone or chalcone) which can under specific conditions spontaneously isomerize into naringenin. The protein is Chalcone synthase 1 (CHS1) of Solanum lycopersicum (Tomato).